A 468-amino-acid chain; its full sequence is Putative amidase AmiC (468 aa).

Active-site charge relay system residues include K80 and S155. S179 functions as the Acyl-ester intermediate in the catalytic mechanism.

Belongs to the amidase family.

It carries out the reaction a monocarboxylic acid amide + H2O = a monocarboxylate + NH4(+). This is Putative amidase AmiC (amiC) from Mycobacterium leprae (strain TN).